The primary structure comprises 303 residues: Protoheme IX farnesyltransferase (303 aa).

9 helical membrane passes run 25-45 (MGLV…AVVM), 54-74 (IPQI…ACAL), 104-124 (LLLL…LLNI), 125-145 (PSGV…SIWS), 151-171 (WNTV…WVAI), 179-199 (AIAL…ALAI), 227-247 (FIWL…GVVF), 248-268 (VVLA…TFKK), and 280-300 (FIYS…VSLL).

It belongs to the UbiA prenyltransferase family. Protoheme IX farnesyltransferase subfamily. In terms of assembly, interacts with CtaA.

The protein resides in the cell membrane. The enzyme catalyses heme b + (2E,6E)-farnesyl diphosphate + H2O = Fe(II)-heme o + diphosphate. Its pathway is porphyrin-containing compound metabolism; heme O biosynthesis; heme O from protoheme: step 1/1. Converts heme B (protoheme IX) to heme O by substitution of the vinyl group on carbon 2 of heme B porphyrin ring with a hydroxyethyl farnesyl side group. The sequence is that of Protoheme IX farnesyltransferase from Staphylococcus aureus (strain Mu3 / ATCC 700698).